The primary structure comprises 227 residues: Sensory transduction protein RegX3 (227 aa).

The 114-residue stretch at 3-116 (SVLIVEDEES…ELIARIRAVL (114 aa)) folds into the Response regulatory domain. Aspartate 52 carries the 4-aspartylphosphate modification. Positions 128–227 (DGVLESGPVR…VRGLGYKLEG (100 aa)) form a DNA-binding region, ompR/PhoB-type.

Phosphorylated by SenX3.

Member of the two-component regulatory system SenX3/RegX3. Specifically binds to the promoter region of the senX3-regX3 operon. This Mycobacterium bovis (strain ATCC BAA-935 / AF2122/97) protein is Sensory transduction protein RegX3.